The primary structure comprises 918 residues: Glutamate receptor ionotropic, kainate 1 (918 aa).

The signal sequence occupies residues 1–30 (MEHGTLLAQPGLWTRDTSWALLYFLCYILP). The Extracellular segment spans residues 31-576 (QTAPQVLRIG…VFSFLNPLSP (546 aa)). Asparagine 68, asparagine 74, asparagine 276, asparagine 379, asparagine 428, asparagine 439, and asparagine 446 each carry an N-linked (GlcNAc...) asparagine glycan. Proline 531, threonine 533, and arginine 538 together coordinate L-glutamate. The N-linked (GlcNAc...) asparagine glycan is linked to asparagine 561. Residues 577–597 (DIWMYVLLACLGVSCVLFVIA) form a helical membrane-spanning segment. The Cytoplasmic portion of the chain corresponds to 598–653 (RFTPYEWYNPHPCNPDSDVVENNFTLLNSFWFGVGALMQQGSELMPKALSTRIVGG). The helical transmembrane segment at 654-674 (IWWFFTLIIISSYTANLAAFL) threads the bilayer. Over 675–834 (TVERMESPID…KEASALGVEN (160 aa)) the chain is Extracellular. Positions 704 and 705 each coordinate L-glutamate. Serine 725 is subject to Phosphoserine; by PKC. Glutamate 753 serves as a coordination point for L-glutamate. The residue at position 761 (threonine 761) is a Phosphothreonine; by PKC. Residues cysteine 765 and cysteine 819 are joined by a disulfide bond. An N-linked (GlcNAc...) asparagine glycan is attached at asparagine 766. Residues 835–855 (IGGIFIVLAAGLVLSVFVAIG) traverse the membrane as a helical segment. Over 856-918 (EFIYKSRKNN…IRKQSSVHTV (63 aa)) the chain is Cytoplasmic.

Belongs to the glutamate-gated ion channel (TC 1.A.10.1) family. GRIK1 subfamily. As to quaternary structure, homotetramer or heterotetramer of pore-forming glutamate receptor subunits. Tetramers may be formed by the dimerization of dimers. Can form functional heteromeric receptors with GRIK5. Can form functional heteromeric receptors with GRIK4. Interacts with KLHL17.

The protein localises to the cell membrane. It is found in the postsynaptic cell membrane. It catalyses the reaction Ca(2+)(in) = Ca(2+)(out). Its function is as follows. Ionotropic glutamate receptor that functions as a cation-permeable ligand-gated ion channel, gated by L-glutamate and the glutamatergic agonist kainic acid. L-glutamate acts as an excitatory neurotransmitter at many synapses in the central nervous system. Binding of the excitatory neurotransmitter L-glutamate induces a conformation change, leading to the opening of the cation channel, and thereby converts the chemical signal to an electrical impulse. The receptor then desensitizes rapidly and enters a transient inactive state, characterized by the presence of bound agonist. Ionotropic glutamate receptor that functions as a cation-permeable ligand-gated ion channel, gated by L-glutamate and the glutamatergic agonist kainic acid. The protein is Glutamate receptor ionotropic, kainate 1 (GRIK1) of Homo sapiens (Human).